Reading from the N-terminus, the 149-residue chain is Protein OPG200 (149 aa).

Belongs to the orthopoxvirus OPG200 family. Homodimers. Interacts with host IKBKB; this interaction inhibits host NF-kappa-B activation.

Functionally, contributes to virulence by binding to the host IKBKB subunit of the IKK complex and preventing host NF-kappa-B activation in response to pro-inflammatory stimuli such as TNF-alpha or IL1B. Mechanistically, sterically hinders the direct contact between the kinase domains of IKBKB in the IKK complex containing IKBKB, CHUK/IKKA and NEMO. The chain is Protein OPG200 (OPG200) from Vaccinia virus (strain Western Reserve) (VACV).